Reading from the N-terminus, the 134-residue chain is Small ribosomal subunit protein uS8c (134 aa).

The protein belongs to the universal ribosomal protein uS8 family. Part of the 30S ribosomal subunit.

The protein resides in the plastid. Its subcellular location is the chloroplast. Its function is as follows. One of the primary rRNA binding proteins, it binds directly to 16S rRNA central domain where it helps coordinate assembly of the platform of the 30S subunit. This is Small ribosomal subunit protein uS8c (rps8) from Arabis hirsuta (Hairy rock-cress).